The following is a 513-amino-acid chain: Membrane protein (513 aa).

4 repeat units span residues P9–A11, P12–A14, P15–A17, and P18–A20. The segment at P9 to A20 is 4 X 3 AA tandem repeats of P-S-A. A run of 14 helical transmembrane segments spans residues L32–P52, G56–I76, A79–F99, T126–L146, I165–A185, N208–I228, Q254–V274, L309–F329, A332–W352, P360–T380, G400–A420, A422–G442, V447–A467, and I487–W507.

Belongs to the SLC13A/DASS transporter (TC 2.A.47) family. DIT1 subfamily.

It is found in the cell membrane. This chain is Membrane protein, found in Cupriavidus necator (strain ATCC 17699 / DSM 428 / KCTC 22496 / NCIMB 10442 / H16 / Stanier 337) (Ralstonia eutropha).